The sequence spans 310 residues: Methionyl-tRNA formyltransferase (310 aa).

A (6S)-5,6,7,8-tetrahydrofolate-binding site is contributed by 109 to 112 (SLLP).

It belongs to the Fmt family.

The enzyme catalyses L-methionyl-tRNA(fMet) + (6R)-10-formyltetrahydrofolate = N-formyl-L-methionyl-tRNA(fMet) + (6S)-5,6,7,8-tetrahydrofolate + H(+). Functionally, attaches a formyl group to the free amino group of methionyl-tRNA(fMet). The formyl group appears to play a dual role in the initiator identity of N-formylmethionyl-tRNA by promoting its recognition by IF2 and preventing the misappropriation of this tRNA by the elongation apparatus. This is Methionyl-tRNA formyltransferase from Parvibaculum lavamentivorans (strain DS-1 / DSM 13023 / NCIMB 13966).